The following is a 360-amino-acid chain: Homoserine O-succinyltransferase (360 aa).

Residue cysteine 146 is the Acyl-thioester intermediate of the active site. Substrate contacts are provided by lysine 167 and serine 196. Histidine 239 acts as the Proton acceptor in catalysis. Glutamate 241 is a catalytic residue. Arginine 253 is a binding site for substrate.

This sequence belongs to the MetA family.

Its subcellular location is the cytoplasm. The catalysed reaction is L-homoserine + succinyl-CoA = O-succinyl-L-homoserine + CoA. It functions in the pathway amino-acid biosynthesis; L-methionine biosynthesis via de novo pathway; O-succinyl-L-homoserine from L-homoserine: step 1/1. Transfers a succinyl group from succinyl-CoA to L-homoserine, forming succinyl-L-homoserine. In vitro, can also use glutaryl-CoA as acyl donor. The protein is Homoserine O-succinyltransferase of Thiothrix nivea (strain ATCC 35100 / DSM 5205 / JP2).